Here is a 398-residue protein sequence, read N- to C-terminus: Phospholipase C (398 aa).

The first 28 residues, 1 to 28 (MKRKIYKLLICATIATSLWAVRTTKVYA), serve as a signal peptide directing secretion. Residues tryptophan 29, histidine 39, aspartate 84, histidine 96, histidine 154, aspartate 158, histidine 164, histidine 176, and glutamate 180 each coordinate Zn(2+). Residues 29–278 (WDGKADGTGT…HDVSDGKDSS (250 aa)) enclose the Zn-dependent PLC domain. Residues 275-283 (KDSSANKNV) form a linker region. Residues 284–398 (NELVAYITTG…ISGNSTYNIK (115 aa)) form the PLAT domain. 9 residues coordinate Ca(2+): glycine 299, threonine 300, aspartate 301, aspartate 321, asparagine 322, glycine 324, asparagine 325, aspartate 326, and aspartate 365.

Ca(2+) serves as cofactor. Zn(2+) is required as a cofactor.

The protein localises to the secreted. It carries out the reaction a 1,2-diacyl-sn-glycero-3-phosphocholine + H2O = phosphocholine + a 1,2-diacyl-sn-glycerol + H(+). Bacterial hemolysins are exotoxins that attack blood cell membranes and cause cell rupture. Constitutes an essential virulence factor in gas gangrene. Binds to eukaryotic membranes where it hydrolyzes both phosphatidylcholine and sphingomyelin, causing cell rupture. The diacylglycerol produced can activate both the arachidonic acid pathway, leading to modulation of the inflammatory response cascade and thrombosis, and protein kinase C, leading to activation of eukaryotic phospholipases and further membrane damage. The protein is Phospholipase C (plc) of Clostridium perfringens.